Reading from the N-terminus, the 632-residue chain is Basic helix-loop-helix ARNT-like protein 1 (632 aa).

The interval 1 to 39 is disordered; it reads MADQRMDISSTISDFMSPGPTDLLSGSLGTSGVDCNRKR. Serine 17 is subject to Phosphoserine; by GSK3-beta. The residue at position 21 (threonine 21) is a Phosphothreonine; by GSK3-beta. Positions 36–41 match the Nuclear localization signal motif; the sequence is NRKRKG. The bHLH domain maps to 79 to 132; sequence NAREAHSQIEKRRRDKMNSFIDELASLVPTCNAMSRKLDKLTVLRMAVQHMKTL. Serine 85 is subject to Phosphoserine. Serine 97 carries the post-translational modification Phosphoserine; by CK2. The Nuclear export signal 1 signature appears at 149–159; the sequence is LSDDELKHLIL. The PAS 1 domain maps to 150-222; that stretch reads SDDELKHLIL…EQLSSSDTAP (73 aa). Lysine 259 participates in a covalent cross-link: Glycyl lysine isopeptide (Lys-Gly) (interchain with G-Cter in SUMO2 and SUMO3). Residue lysine 266 forms a Glycyl lysine isopeptide (Lys-Gly) (interchain with G-Cter in SUMO); alternate linkage. Lysine 266 participates in a covalent cross-link: Glycyl lysine isopeptide (Lys-Gly) (interchain with G-Cter in SUMO2); alternate. Positions 333-403 constitute a PAS 2 domain; sequence QPANGEIRVK…CHRQVLQTRE (71 aa). Positions 367–375 match the Nuclear export signal 2 motif; it reads LAYLPQELL. Positions 408 to 451 constitute a PAC domain; the sequence is NCYKFKIKDGSFITLRSRWFSFMNPWTKEVEYIVSTNTVVLANV. 2 disordered regions span residues 465–498 and 517–601; these read PPHS…RAGA and GSSP…SPSN. The interaction with CIART stretch occupies residues 514-594; it reads RIRGSSPSSC…IGIDMIDNDQ (81 aa). The segment covering 517 to 527 has biased composition (low complexity); the sequence is GSSPSSCGSSP. An N6-acetyllysine modification is found at lysine 544.

Component of the circadian clock oscillator which includes the CRY1/2 proteins, CLOCK or NPAS2, BMAL1 or BMAL2, CSNK1D and/or CSNK1E, TIMELESS and the PER1/2/3 proteins. Forms a heterodimer with CLOCK. The CLOCK-BMAL1 heterodimer is required for E-box-dependent transactivation, for CLOCK nuclear translocation and degradation, and, for phosphorylation of both CLOCK and BMAL1. Part of a nuclear complex which also includes RACK1 and PRKCA; RACK1 and PRKCA are recruited to the complex in a circadian manner. Interacts with NPAS2. Interacts with EZH2. Interacts with SUMO3. Interacts with SIRT1. Interacts with AHR. Interacts with ID1, ID2 and ID3. Interacts with DDX4. Interacts with OGT. Interacts with EED and SUZ12. Interacts with MTA1. Interacts with CIART. Interacts with HSP90. Interacts with KAT2B and EP300. Interacts with BHLHE40/DEC1 and BHLHE41/DEC2. Interacts with RELB and the interaction is enhanced in the presence of CLOCK. Interacts with PER1, PER2, CRY1 and CRY2 and this interaction requires a translocation to the nucleus. Interaction of the CLOCK-BMAL1 heterodimer with PER or CRY inhibits transcription activation. Interaction of the CLOCK-BMAL1 with CRY1 is independent of DNA but with PER2 is off DNA. The CLOCK-BMAL1 heterodimer interacts with GSK3B. Interacts with KDM5A. Interacts with KMT2A; in a circadian manner. Interacts with UBE3A. Interacts with PRKCG. Interacts with MAGEL2. Interacts with NCOA2. Interacts with THRAP3. The CLOCK-BMAL1 heterodimer interacts with PASD1. Interacts with PASD1. Interacts with USP9X. Interacts with PIWIL2 (via PIWI domain). Interacts with HDAC3. Interacts with HNF4A. Ubiquitinated, leading to its proteasomal degradation. Deubiquitinated by USP9X. Post-translationally, O-glycosylated; contains O-GlcNAc. O-glycosylation by OGT prevents protein degradation by inhibiting ubiquitination. It also stabilizes the CLOCK-BMAL1 heterodimer thereby increasing CLOCK-BMAL1-mediated transcription of genes in the negative loop of the circadian clock such as PER1/2/3 and CRY1/2. In terms of processing, acetylated on Lys-544 by CLOCK during the repression phase of the circadian cycle. Acetylation facilitates recruitment of CRY1 protein and initiates the repression phase of the circadian cycle. Acetylated at Lys-544 by KAT5 during the activation phase of the cycle, leading to recruitment of the positive transcription elongation factor b (P-TEFb) and BRD4, followed by productive elongation of circadian transcripts. Deacetylated by SIRT1, which may result in decreased protein stability. Phosphorylated upon dimerization with CLOCK. Phosphorylation enhances the transcriptional activity, alters the subcellular localization and decreases the stability of the CLOCK-BMAL1 heterodimer by promoting its degradation. Phosphorylation shows circadian variations in the liver with a peak between CT10 to CT14. Phosphorylation at Ser-97 by CK2 is essential for its nuclear localization, its interaction with CLOCK and controls CLOCK nuclear entry. Dephosphorylation at Ser-85 is important for dimerization with CLOCK and transcriptional activity. Post-translationally, sumoylated on Lys-266 upon dimerization with CLOCK. Predominantly conjugated to poly-SUMO2/3 rather than SUMO1 and the level of these conjugates undergo rhythmic variation, peaking at CT9-CT12. Sumoylation localizes it exclusively to the PML body and promotes its ubiquitination in the PML body, ubiquitin-dependent proteasomal degradation and the transcriptional activity of the CLOCK-BMAL1 heterodimer. In terms of processing, undergoes lysosome-mediated degradation in a time-dependent manner in the liver. As to expression, expressed in liver and testis (at protein level). Expressed in the suprachiasmatic nucleus (SCN) in a circadian manner.

It is found in the nucleus. Its subcellular location is the cytoplasm. The protein resides in the PML body. The redox state of the cell can modulate the transcriptional activity of the CLOCK-BMAL1 and NPAS2-BMAL1 heterodimers; NADH and NADPH enhance the DNA-binding activity of the heterodimers. Transcriptional activator which forms a core component of the circadian clock. The circadian clock, an internal time-keeping system, regulates various physiological processes through the generation of approximately 24 hour circadian rhythms in gene expression, which are translated into rhythms in metabolism and behavior. It is derived from the Latin roots 'circa' (about) and 'diem' (day) and acts as an important regulator of a wide array of physiological functions including metabolism, sleep, body temperature, blood pressure, endocrine, immune, cardiovascular, and renal function. Consists of two major components: the central clock, residing in the suprachiasmatic nucleus (SCN) of the brain, and the peripheral clocks that are present in nearly every tissue and organ system. Both the central and peripheral clocks can be reset by environmental cues, also known as Zeitgebers (German for 'timegivers'). The predominant Zeitgeber for the central clock is light, which is sensed by retina and signals directly to the SCN. The central clock entrains the peripheral clocks through neuronal and hormonal signals, body temperature and feeding-related cues, aligning all clocks with the external light/dark cycle. Circadian rhythms allow an organism to achieve temporal homeostasis with its environment at the molecular level by regulating gene expression to create a peak of protein expression once every 24 hours to control when a particular physiological process is most active with respect to the solar day. Transcription and translation of core clock components (CLOCK, NPAS2, BMAL1, BMAL2, PER1, PER2, PER3, CRY1 and CRY2) plays a critical role in rhythm generation, whereas delays imposed by post-translational modifications (PTMs) are important for determining the period (tau) of the rhythms (tau refers to the period of a rhythm and is the length, in time, of one complete cycle). A diurnal rhythm is synchronized with the day/night cycle, while the ultradian and infradian rhythms have a period shorter and longer than 24 hours, respectively. Disruptions in the circadian rhythms contribute to the pathology of cardiovascular diseases, cancer, metabolic syndromes and aging. A transcription/translation feedback loop (TTFL) forms the core of the molecular circadian clock mechanism. Transcription factors, CLOCK or NPAS2 and BMAL1 or BMAL2, form the positive limb of the feedback loop, act in the form of a heterodimer and activate the transcription of core clock genes and clock-controlled genes (involved in key metabolic processes), harboring E-box elements (5'-CACGTG-3') within their promoters. The core clock genes: PER1/2/3 and CRY1/2 which are transcriptional repressors form the negative limb of the feedback loop and interact with the CLOCK|NPAS2-BMAL1|BMAL2 heterodimer inhibiting its activity and thereby negatively regulating their own expression. This heterodimer also activates nuclear receptors NR1D1/2 and RORA/B/G, which form a second feedback loop and which activate and repress BMAL1 transcription, respectively. BMAL1 positively regulates myogenesis and negatively regulates adipogenesis via the transcriptional control of the genes of the canonical Wnt signaling pathway. Plays a role in normal pancreatic beta-cell function; regulates glucose-stimulated insulin secretion via the regulation of antioxidant genes NFE2L2/NRF2 and its targets SESN2, PRDX3, CCLC and CCLM. Negatively regulates the mTORC1 signaling pathway; regulates the expression of MTOR and DEPTOR. Controls diurnal oscillations of Ly6C inflammatory monocytes; rhythmic recruitment of the PRC2 complex imparts diurnal variation to chemokine expression that is necessary to sustain Ly6C monocyte rhythms. Regulates the expression of HSD3B2, STAR, PTGS2, CYP11A1, CYP19A1 and LHCGR in the ovary and also the genes involved in hair growth. Plays an important role in adult hippocampal neurogenesis by regulating the timely entry of neural stem/progenitor cells (NSPCs) into the cell cycle and the number of cell divisions that take place prior to cell-cycle exit. Regulates the circadian expression of CIART and KLF11. The CLOCK-BMAL1 heterodimer regulates the circadian expression of SERPINE1/PAI1, VWF, B3, CCRN4L/NOC, NAMPT, DBP, MYOD1, PPARGC1A, PPARGC1B, SIRT1, GYS2, F7, NGFR, GNRHR, BHLHE40/DEC1, ATF4, MTA1, KLF10 and also genes implicated in glucose and lipid metabolism. Promotes rhythmic chromatin opening, regulating the DNA accessibility of other transcription factors. May play a role in spermatogenesis; contributes to the chromatoid body assembly and physiology. The NPAS2-BMAL1 heterodimer positively regulates the expression of MAOA, F7 and LDHA and modulates the circadian rhythm of daytime contrast sensitivity by regulating the rhythmic expression of adenylate cyclase type 1 (ADCY1) in the retina. The preferred binding motif for the CLOCK-BMAL1 heterodimer is 5'-CACGTGA-3', which contains a flanking adenine nucleotide at the 3-prime end of the canonical 6-nucleotide E-box sequence. CLOCK specifically binds to the half-site 5'-CAC-3', while BMAL1 binds to the half-site 5'-GTGA-3'. The CLOCK-BMAL1 heterodimer also recognizes the non-canonical E-box motifs 5'-AACGTGA-3' and 5'-CATGTGA-3'. Essential for the rhythmic interaction of CLOCK with ASS1 and plays a critical role in positively regulating CLOCK-mediated acetylation of ASS1. Plays a role in protecting against lethal sepsis by limiting the expression of immune checkpoint protein CD274 in macrophages in a PKM2-dependent manner. Regulates the diurnal rhythms of skeletal muscle metabolism via transcriptional activation of genes promoting triglyceride synthesis (DGAT2) and metabolic efficiency (COQ10B). In Mus musculus (Mouse), this protein is Basic helix-loop-helix ARNT-like protein 1 (Bmal1).